A 428-amino-acid polypeptide reads, in one-letter code: Peptidase B (428 aa).

Residues Lys195 and Asp200 each coordinate Mn(2+). Residue Lys207 is part of the active site. Mn(2+) contacts are provided by Asp218, Asp277, and Glu279. Residue Arg281 is part of the active site.

Belongs to the peptidase M17 family. Homohexamer. The cofactor is Mn(2+).

Its subcellular location is the cytoplasm. It carries out the reaction Release of an N-terminal amino acid, Xaa, from a peptide or arylamide. Xaa is preferably Glu or Asp but may be other amino acids, including Leu, Met, His, Cys and Gln.. Functionally, probably plays an important role in intracellular peptide degradation. This Enterobacter sp. (strain 638) protein is Peptidase B.